A 357-amino-acid chain; its full sequence is RNA-binding protein 4B (357 aa).

RRM domains lie at 2–72 (VKLF…ASKN) and 78–148 (TKLH…LSTS). The CCHC-type zinc finger occupies 160–177 (SGCYRCGKEGHWSKECPV). Residues 196-357 (AVRTPYTMGY…YVDRTRYSAF (162 aa)) are interaction with TNPO3.

As to quaternary structure, interacts with TNPO3, which may mediate nuclear import of the protein. In terms of tissue distribution, expressed in the suprachiasmatic nucleus (SCN) (at protein level). Expressed in the suprachiasmatic nucleus (SCN).

The protein localises to the nucleus. Its subcellular location is the nucleolus. In terms of biological role, required for the translational activation of PER1 mRNA in response to circadian clock. Binds directly to the 3'-UTR of the PER1 mRNA. The polypeptide is RNA-binding protein 4B (Rbm4b) (Mus musculus (Mouse)).